Reading from the N-terminus, the 314-residue chain is tRNA dimethylallyltransferase (314 aa).

13 to 20 serves as a coordination point for ATP; it reads GPTAIGKT. 15–20 is a binding site for substrate; sequence TAIGKT. The interaction with substrate tRNA stretch occupies residues 38 to 41; sequence DSMQ.

This sequence belongs to the IPP transferase family. As to quaternary structure, monomer. Mg(2+) is required as a cofactor.

It catalyses the reaction adenosine(37) in tRNA + dimethylallyl diphosphate = N(6)-dimethylallyladenosine(37) in tRNA + diphosphate. Catalyzes the transfer of a dimethylallyl group onto the adenine at position 37 in tRNAs that read codons beginning with uridine, leading to the formation of N6-(dimethylallyl)adenosine (i(6)A). The polypeptide is tRNA dimethylallyltransferase (Desulfotalea psychrophila (strain LSv54 / DSM 12343)).